Here is a 466-residue protein sequence, read N- to C-terminus: Bifunctional NAD(P)H-hydrate repair enzyme Nnr (466 aa).

Residues 1–207 (MLSVYEKVNA…HLGVFNQIYE (207 aa)) form an NAD(P)H-hydrate epimerase region. The 200-residue stretch at 8–207 (VNALDKRAIE…HLGVFNQIYE (200 aa)) folds into the YjeF N-terminal domain. The interval 56-60 (DNGGD) is NADPHX 1; for epimerase activity. K(+)-binding residues include N57 and D120. Residues 124–130 (GSHFKGK) are NADPHX 1; for epimerase activity. Position 151 (D151) interacts with (6S)-NADPHX. S154 lines the K(+) pocket. The YjeF C-terminal domain occupies 215–466 (LEKSDLKLPL…LDLIEKIKQL (252 aa)). Residues 215 to 466 (LEKSDLKLPL…LDLIEKIKQL (252 aa)) form an ADP-dependent (S)-NAD(P)H-hydrate dehydratase region. (6S)-NADPHX is bound at residue G300. The segment at 342–348 (HPKEFLS) is NADPHX 2; for dehydratase activity. ADP is bound by residues 385–389 (KGANT) and 404–413 (SVALAKAGSG). Residue D414 participates in (6S)-NADPHX binding.

In the N-terminal section; belongs to the NnrE/AIBP family. The protein in the C-terminal section; belongs to the NnrD/CARKD family. Requires K(+) as cofactor.

The enzyme catalyses (6S)-NADHX + ADP = AMP + phosphate + NADH + H(+). It catalyses the reaction (6S)-NADPHX + ADP = AMP + phosphate + NADPH + H(+). The catalysed reaction is (6R)-NADHX = (6S)-NADHX. It carries out the reaction (6R)-NADPHX = (6S)-NADPHX. Bifunctional enzyme that catalyzes the epimerization of the S- and R-forms of NAD(P)HX and the dehydration of the S-form of NAD(P)HX at the expense of ADP, which is converted to AMP. This allows the repair of both epimers of NAD(P)HX, a damaged form of NAD(P)H that is a result of enzymatic or heat-dependent hydration. This Helicobacter pylori (strain ATCC 700392 / 26695) (Campylobacter pylori) protein is Bifunctional NAD(P)H-hydrate repair enzyme Nnr (nnr).